The following is a 245-amino-acid chain: Balbiani ring A 28 kDa protein (245 aa).

The first 16 residues, 1-16, serve as a signal peptide directing secretion; the sequence is MKSIIKHILFVVLLIS. A phosphoserine mark is found at serine 33, serine 40, serine 92, serine 93, and serine 115.

As to expression, salivary gland.

The protein resides in the secreted. In terms of biological role, used by the larvae to construct a supramolecular structure, the larval tube. In Chironomus thummi thummi (Midge), this protein is Balbiani ring A 28 kDa protein.